Reading from the N-terminus, the 865-residue chain is Anaphase-promoting complex subunit 6 (865 aa).

3 TPR repeats span residues 11–42 (IEKQ…LNLV), 46–75 (SKEY…LIQK), and 88–149 (EDYQ…LQIL). Residues 153-293 (NDSSENMDDE…NNNNNNNNNF (141 aa)) are disordered. Residues 183 to 202 (NCDDDDDDDDDDDDDDDDEK) are compositionally biased toward acidic residues. Positions 249-292 (NKNNNKNNNNNNNNNNNNNNNNNNNNNNNNNNNNNNNNNNNNNN) are enriched in low complexity. 9 TPR repeats span residues 300 to 331 (IRSS…ALLT), 336 to 359 (FEAF…LLEK), 366 to 438 (DSWI…DIST), 478 to 506 (DIQT…ILKQ), 515 to 542 (CLMV…LVDS), 573 to 602 (AISW…STTL), 607 to 635 (GASW…TSSR), 642 to 670 (LPLL…AKDI), and 675 to 709 (PMIF…KIKS). A compositionally biased stretch (low complexity) spans 403-434 (SNNNTFGANNNNNNNNNNNNNNNNNNNNNSNN). Residues 403-436 (SNNNTFGANNNNNNNNNNNNNNNNNNNNNSNNDI) form a disordered region. Residues 738-767 (GIGNNNNNNNNRRTTTTTTTTSNNQKKNSS) form a disordered region. TPR repeat units follow at residues 777-809 (ESWE…SLSL) and 814-843 (PSTY…SLSI).

The protein belongs to the APC6/CDC16 family. In terms of assembly, the APC/C is composed of at least 13 subunits that stay tightly associated throughout the cell cycle: anapc1, anapc2, anapc3, anapc4, anapc5, anapc6, anapc7, anapc8, anapc10, anapc11, cdc20, cdc26 and cdh1.

The protein resides in the nucleus. It participates in protein modification; protein ubiquitination. Functionally, component of the anaphase promoting complex/cyclosome (APC/C), a cell cycle-regulated E3 ubiquitin-protein ligase complex that controls progression through mitosis and the G1 phase of the cell cycle. This Dictyostelium discoideum (Social amoeba) protein is Anaphase-promoting complex subunit 6 (anapc6).